Here is a 179-residue protein sequence, read N- to C-terminus: ATP synthase subunit delta 2 (179 aa).

Belongs to the ATPase delta chain family. In terms of assembly, F-type ATPases have 2 components, F(1) - the catalytic core - and F(0) - the membrane proton channel. F(1) has five subunits: alpha(3), beta(3), gamma(1), delta(1), epsilon(1). F(0) has three main subunits: a(1), b(2) and c(10-14). The alpha and beta chains form an alternating ring which encloses part of the gamma chain. F(1) is attached to F(0) by a central stalk formed by the gamma and epsilon chains, while a peripheral stalk is formed by the delta and b chains.

It is found in the cell inner membrane. In terms of biological role, f(1)F(0) ATP synthase produces ATP from ADP in the presence of a proton or sodium gradient. F-type ATPases consist of two structural domains, F(1) containing the extramembraneous catalytic core and F(0) containing the membrane proton channel, linked together by a central stalk and a peripheral stalk. During catalysis, ATP synthesis in the catalytic domain of F(1) is coupled via a rotary mechanism of the central stalk subunits to proton translocation. Functionally, this protein is part of the stalk that links CF(0) to CF(1). It either transmits conformational changes from CF(0) to CF(1) or is implicated in proton conduction. This chain is ATP synthase subunit delta 2, found in Syntrophotalea carbinolica (strain DSM 2380 / NBRC 103641 / GraBd1) (Pelobacter carbinolicus).